Here is a 262-residue protein sequence, read N- to C-terminus: Phosphonates import ATP-binding protein PhnC (262 aa).

Residues 5–253 (IRVEKLAKTF…RFDHLYRSIN (249 aa)) form the ABC transporter domain. 37 to 44 (GPSGSGKS) contributes to the ATP binding site.

This sequence belongs to the ABC transporter superfamily. Phosphonates importer (TC 3.A.1.9.1) family. The complex is composed of two ATP-binding proteins (PhnC), two transmembrane proteins (PhnE) and a solute-binding protein (PhnD).

The protein resides in the cell inner membrane. It carries out the reaction phosphonate(out) + ATP + H2O = phosphonate(in) + ADP + phosphate + H(+). Part of the ABC transporter complex PhnCDE involved in phosphonates import. Responsible for energy coupling to the transport system. This Escherichia coli O6:K15:H31 (strain 536 / UPEC) protein is Phosphonates import ATP-binding protein PhnC.